A 734-amino-acid polypeptide reads, in one-letter code: Photosystem I P700 chlorophyll a apoprotein A2 (734 aa).

8 helical membrane-spanning segments follow: residues 46-69, 135-158, 175-199, 273-291, 330-353, 369-395, 417-439, and 517-535; these read IFAS…FHVA, LYTG…LHLQ, LNHH…HVAI, IAHH…GHMY, LHFQ…QHMY, AALY…IFFI, AIIS…LYVH, and FLVH…LILV. Positions 559 and 568 each coordinate [4Fe-4S] cluster. The next 2 membrane-spanning stretches (helical) occupy residues 575–596 and 643–665; these read AFYL…YWHW and LSVW…MFLI. Residues His654, Met662, and Tyr670 each coordinate chlorophyll a. Trp671 contacts phylloquinone. The chain crosses the membrane as a helical span at residues 707–727; the sequence is LVGLAHFSVGYIFTYAAFLIA.

Belongs to the PsaA/PsaB family. The PsaA/B heterodimer binds the P700 chlorophyll special pair and subsequent electron acceptors. PSI consists of a core antenna complex that captures photons, and an electron transfer chain that converts photonic excitation into a charge separation. The eukaryotic PSI reaction center is composed of at least 11 subunits. The cofactor is P700 is a chlorophyll a/chlorophyll a' dimer, A0 is one or more chlorophyll a, A1 is one or both phylloquinones and FX is a shared 4Fe-4S iron-sulfur center..

It is found in the plastid. Its subcellular location is the chloroplast thylakoid membrane. The enzyme catalyses reduced [plastocyanin] + hnu + oxidized [2Fe-2S]-[ferredoxin] = oxidized [plastocyanin] + reduced [2Fe-2S]-[ferredoxin]. PsaA and PsaB bind P700, the primary electron donor of photosystem I (PSI), as well as the electron acceptors A0, A1 and FX. PSI is a plastocyanin-ferredoxin oxidoreductase, converting photonic excitation into a charge separation, which transfers an electron from the donor P700 chlorophyll pair to the spectroscopically characterized acceptors A0, A1, FX, FA and FB in turn. Oxidized P700 is reduced on the lumenal side of the thylakoid membrane by plastocyanin. This Citrus sinensis (Sweet orange) protein is Photosystem I P700 chlorophyll a apoprotein A2.